We begin with the raw amino-acid sequence, 66 residues long: Large ribosomal subunit protein bL35 (66 aa).

The protein belongs to the bacterial ribosomal protein bL35 family.

In Ruegeria pomeroyi (strain ATCC 700808 / DSM 15171 / DSS-3) (Silicibacter pomeroyi), this protein is Large ribosomal subunit protein bL35.